Reading from the N-terminus, the 116-residue chain is Beta-2-microglobulin (116 aa).

Residues 1 to 19 (MRAIITFALFCVLYVTVQG) form the signal peptide. The 87-residue stretch at 24 to 110 (PKVQVYSHFP…VRHMNNKNIY (87 aa)) folds into the Ig-like C1-type domain. C44 and C99 are joined by a disulfide.

It belongs to the beta-2-microglobulin family. Heterodimer of an alpha chain and a beta chain. Beta-2-microglobulin is the beta-chain of major histocompatibility complex class I molecules.

It is found in the secreted. Its function is as follows. Component of the class I major histocompatibility complex (MHC). Involved in the presentation of peptide antigens to the immune system. This is Beta-2-microglobulin (b2m) from Cyprinus carpio (Common carp).